The following is a 260-amino-acid chain: Phosphate import ATP-binding protein PstB 2 (260 aa).

Residues 9–255 (IKVKDLSFYY…PLDSRTRDYV (247 aa)) form the ABC transporter domain. ATP is bound at residue 41–48 (GPSGCGKS).

Belongs to the ABC transporter superfamily. Phosphate importer (TC 3.A.1.7) family. As to quaternary structure, the complex is composed of two ATP-binding proteins (PstB), two transmembrane proteins (PstC and PstA) and a solute-binding protein (PstS).

It is found in the cell inner membrane. It catalyses the reaction phosphate(out) + ATP + H2O = ADP + 2 phosphate(in) + H(+). Functionally, part of the ABC transporter complex PstSACB involved in phosphate import. Responsible for energy coupling to the transport system. The polypeptide is Phosphate import ATP-binding protein PstB 2 (Nostoc sp. (strain PCC 7120 / SAG 25.82 / UTEX 2576)).